The chain runs to 528 residues: Tyrosine-protein kinase transforming protein Yes (528 aa).

Over residues 1-12 (DKGPAMKYRTDN) the composition is skewed to basic and acidic residues. The interval 1 to 35 (DKGPAMKYRTDNTPEPISSHVSHYGSDSSQATQSP) is disordered. The segment covering 18–29 (SSHVSHYGSDSS) has biased composition (low complexity). An SH3 domain is found at 81–142 (GGGTVFVALY…PSNYVAPADS (62 aa)). Positions 148–245 (WYFGKMGRKD…GLCHKLTTVC (98 aa)) constitute an SH2 domain. The region spanning 267–520 (LRLEVKLGQG…YIQSFLEDYF (254 aa)) is the Protein kinase domain. ATP is bound by residues 273 to 281 (LGQGCFGEV) and Lys-295. The active-site Proton acceptor is Asp-386. Phosphotyrosine; by autocatalysis is present on Tyr-416.

It belongs to the protein kinase superfamily. Tyr protein kinase family. SRC subfamily.

The enzyme catalyses L-tyrosyl-[protein] + ATP = O-phospho-L-tyrosyl-[protein] + ADP + H(+). The chain is Tyrosine-protein kinase transforming protein Yes (V-YES) from Galliformes (Y73SV).